The primary structure comprises 351 residues: tRNA (guanine(10)-N2)-dimethyltransferase (351 aa).

One can recognise a THUMP domain in the interval 57-165 (EGHRIIFRYN…ENTFFISNVL (109 aa)).

It belongs to the methyltransferase superfamily. Trm-G10 family. In terms of assembly, monomer.

The protein resides in the cytoplasm. The enzyme catalyses guanosine(10) in tRNA + 2 S-adenosyl-L-methionine = N(2)-dimethylguanosine(10) in tRNA + 2 S-adenosyl-L-homocysteine + 2 H(+). Catalyzes the adenosylmethionine-dependent methylation of the exocyclic amino group (N(2)) of guanosine at position 10 of various tRNAs. Acts via a two-step process that leads to the formation of either N(2)-monomethyl (m(2)G) or N(2)-dimethylguanosine (m(2)(2)G). This chain is tRNA (guanine(10)-N2)-dimethyltransferase (trmG10), found in Methanocaldococcus jannaschii (strain ATCC 43067 / DSM 2661 / JAL-1 / JCM 10045 / NBRC 100440) (Methanococcus jannaschii).